The following is a 492-amino-acid chain: MTVHFPFDNSYAALPDNFFARVAPTPVAAPRLIKLNRPLAERLGLDPDWLDSPEGAEILAGARLPEGAASIAMAYAGHQFGQFVPQLGDGRAILLGEVIDRDGVRRDIQLKGSGRTPFSRMGDGRAALGPVLREYIVSEAMAALGIPTTRSLAAVLTGERVVRDQIQPGAVLTRVASSHIRVGTFQFFAARGDREAVRALADHVIARHYPEAAQADAPYLALLEGVIARQADLIARWMMIGFIHGVMNTDNCSIAGETIDYGPCAFMDTFDPKTVFSSIDHMGRYAFGNQPPIALWNLTRLAECLVPLLSADEDKGVEIAQTVLGGFAERFNATYLAGLAAKLGLFTTQADDAQLSQDFLAAMAKGRADFTLTFRRLSDAAIDPTELGTVRALFDDPAAFDDWAPRWRQRVTAEPQDGAARQAAMRAVNPAYIPRNHRVEAAIRAAVDKDDFGPFHELLTVLTNPFREQPEFDRYADPPQPHERVLETFCGT.

Residues Gly-88, Gly-90, Arg-91, Lys-111, Asp-123, Gly-124, Arg-174, and Arg-181 each coordinate ATP. Asp-250 serves as the catalytic Proton acceptor. Mg(2+) is bound by residues Asn-251 and Asp-260. Asp-260 contacts ATP.

It belongs to the SELO family. The cofactor is Mg(2+). Mn(2+) is required as a cofactor.

It catalyses the reaction L-seryl-[protein] + ATP = 3-O-(5'-adenylyl)-L-seryl-[protein] + diphosphate. The enzyme catalyses L-threonyl-[protein] + ATP = 3-O-(5'-adenylyl)-L-threonyl-[protein] + diphosphate. The catalysed reaction is L-tyrosyl-[protein] + ATP = O-(5'-adenylyl)-L-tyrosyl-[protein] + diphosphate. It carries out the reaction L-histidyl-[protein] + UTP = N(tele)-(5'-uridylyl)-L-histidyl-[protein] + diphosphate. It catalyses the reaction L-seryl-[protein] + UTP = O-(5'-uridylyl)-L-seryl-[protein] + diphosphate. The enzyme catalyses L-tyrosyl-[protein] + UTP = O-(5'-uridylyl)-L-tyrosyl-[protein] + diphosphate. Nucleotidyltransferase involved in the post-translational modification of proteins. It can catalyze the addition of adenosine monophosphate (AMP) or uridine monophosphate (UMP) to a protein, resulting in modifications known as AMPylation and UMPylation. The chain is Protein nucleotidyltransferase YdiU from Rhodopseudomonas palustris (strain BisB5).